Reading from the N-terminus, the 496-residue chain is MPKAKYVLALDQGTTGTHVSILDTKLQVVGRSYKEFTQHFPKPSWVEHDLDEIWASSEWCIARALKSAGLRGKDIAAIGITNQRETTGLWMRGSGQPLSHAIVWQDRRTAEQCRRLKEQGVEPRVREVTGLVVDPYFSGTKLTWMFDHLKGARAKAEKGDVCFGTIDTWLVYKLTGGAAHVTDVSNASRTLLMDLTTLQWSDEMRAMLSVPAACLPQIRGSAEVYGTTRGMRSLPDGIPVAGMAGDQQAALFGQACFEPGESKCTYGTGAFLLMNTGSEPVRSSAGLLTTVAWRLGGTGTTTYALEGSSFIAGAAVQWMRDGLKVIKRAPDIEALAASVKDSGDVVFVPALAGLGAPHWRPEARGLFAGIDRSTTVAHMARAVLEGIALQIHDLAEAMRRDSGRDIPVFKADGGAAANNLLMQFQADVLGVPLVRPRNLETTSLGAAFLGGLGAGIWDSPEAIRRAWKAEKTFKPKMKPDARERHLAKWKRAVERA.

Thr-14 is a binding site for ADP. Residues Thr-14 and Thr-15 each contribute to the ATP site. Thr-14 is a sn-glycerol 3-phosphate binding site. Residues Arg-84, Glu-85, Tyr-136, and Asp-246 each contribute to the sn-glycerol 3-phosphate site. Positions 84, 85, 136, 246, and 247 each coordinate glycerol. Residues Thr-268 and Gly-313 each coordinate ADP. Positions 268, 313, 317, and 414 each coordinate ATP. 2 residues coordinate ADP: Gly-414 and Asn-418.

Belongs to the FGGY kinase family.

It carries out the reaction glycerol + ATP = sn-glycerol 3-phosphate + ADP + H(+). Its pathway is polyol metabolism; glycerol degradation via glycerol kinase pathway; sn-glycerol 3-phosphate from glycerol: step 1/1. Inhibited by fructose 1,6-bisphosphate (FBP). Key enzyme in the regulation of glycerol uptake and metabolism. Catalyzes the phosphorylation of glycerol to yield sn-glycerol 3-phosphate. This is Glycerol kinase from Myxococcus xanthus (strain DK1622).